Reading from the N-terminus, the 343-residue chain is Major outer membrane protein (343 aa).

A signal peptide spans 1 to 20 (MKKTIVALAVAAVAATSANA).

In terms of assembly, disulfide bond interactions within and between MOMP molecules and other components form high molecular-weight oligomers.

It is found in the cell outer membrane. In terms of biological role, structural rigidity of the outer membrane of elementary bodies and porin forming, permitting diffusion of solutes through the intracellular reticulate body membrane. The chain is Major outer membrane protein (ompH) from Pasteurella multocida.